The sequence spans 1074 residues: DNA annealing helicase and endonuclease ZRANB3 (1074 aa).

Residues Thr-46–Gln-208 form the Helicase ATP-binding domain. The segment at Thr-46–Glu-481 is DNA annealing helicase activity. Residue Asp-59–Thr-66 coordinates ATP. Positions Asp-157–His-160 match the DEAH box motif. Residues Ala-325–Glu-481 form the Helicase C-terminal domain. A PIP-box motif is present at residues Gln-519–Phe-526. At Ser-566 the chain carries Phosphoserine. The RanBP2-type zinc-finger motif lies at Phe-617–Gly-647. A disordered region spans residues Gln-659–Gln-719. 2 stretches are compositionally biased toward basic and acidic residues: residues Asn-662 to Lys-674 and Ala-696 to Leu-711. In terms of domain architecture, HNH spans Pro-1006–Gln-1046. The tract at residues Pro-1006–Lys-1074 is endonuclease activity. Residues Arg-1069–Lys-1073 carry the APIM motif motif.

This sequence belongs to the SNF2/RAD54 helicase family. In terms of assembly, interacts (via PIP-box and RanBP2-type zinc finger) with PCNA (when PCNA is polyubiquitinated via 'Lys-63'-linked polyubiquitin).

Its subcellular location is the nucleus. The protein localises to the chromosome. DNA annealing helicase and endonuclease required to maintain genome stability at stalled or collapsed replication forks by facilitating fork restart and limiting inappropriate recombination that could occur during template switching events. Recruited to the sites of stalled DNA replication by polyubiquitinated PCNA and acts as a structure-specific endonuclease that cleaves the replication fork D-loop intermediate, generating an accessible 3'-OH group in the template of the leading strand, which is amenable to extension by DNA polymerase. In addition to endonuclease activity, also catalyzes the fork regression via annealing helicase activity in order to prevent disintegration of the replication fork and the formation of double-strand breaks. This Bos taurus (Bovine) protein is DNA annealing helicase and endonuclease ZRANB3 (ZRANB3).